The primary structure comprises 354 residues: Photosystem II protein D1 3 (354 aa).

A run of 3 helical transmembrane segments spans residues 29–46 (YIGW…TATT), 118–133 (HFLI…EWEL), and 142–156 (WIAV…AATA). Residue His118 coordinates chlorophyll a. Tyr126 lines the pheophytin a pocket. 2 residues coordinate [CaMn4O5] cluster: Asp170 and Glu189. A helical membrane pass occupies residues 197 to 218 (FHQLGVAGVFGGALFSAMHGSL). Residue His198 participates in chlorophyll a binding. A quinone contacts are provided by residues His215 and 264 to 265 (SF). His215 is a Fe cation binding site. Residue His272 participates in Fe cation binding. Residues 274–288 (FLAAWPVIGIWFTAL) form a helical membrane-spanning segment. [CaMn4O5] cluster is bound by residues His332, Glu333, Asp342, and Ala344. The propeptide occupies 345 to 354 (AVEVAPAVRG).

The protein belongs to the reaction center PufL/M/PsbA/D family. In terms of assembly, PSII is composed of 1 copy each of membrane proteins PsbA, PsbB, PsbC, PsbD, PsbE, PsbF, PsbH, PsbI, PsbJ, PsbK, PsbL, PsbM, PsbT, PsbX, PsbY, PsbZ, Psb30/Ycf12, peripheral proteins PsbO, CyanoQ (PsbQ), PsbU, PsbV and a large number of cofactors. It forms dimeric complexes. It depends on The D1/D2 heterodimer binds P680, chlorophylls that are the primary electron donor of PSII, and subsequent electron acceptors. It shares a non-heme iron and each subunit binds pheophytin, quinone, additional chlorophylls, carotenoids and lipids. D1 provides most of the ligands for the Mn4-Ca-O5 cluster of the oxygen-evolving complex (OEC). There is also a Cl(-1) ion associated with D1 and D2, which is required for oxygen evolution. The PSII complex binds additional chlorophylls, carotenoids and specific lipids. as a cofactor. In terms of processing, tyr-161 forms a radical intermediate that is referred to as redox-active TyrZ, YZ or Y-Z. Post-translationally, C-terminally processed by CtpA; processing is essential to allow assembly of the oxygen-evolving complex and thus photosynthetic growth.

It localises to the cellular thylakoid membrane. It carries out the reaction 2 a plastoquinone + 4 hnu + 2 H2O = 2 a plastoquinol + O2. Functionally, photosystem II (PSII) is a light-driven water:plastoquinone oxidoreductase that uses light energy to abstract electrons from H(2)O, generating O(2) and a proton gradient subsequently used for ATP formation. It consists of a core antenna complex that captures photons, and an electron transfer chain that converts photonic excitation into a charge separation. The D1/D2 (PsbA/PsbD) reaction center heterodimer binds P680, the primary electron donor of PSII as well as several subsequent electron acceptors. The sequence is that of Photosystem II protein D1 3 from Synechococcus sp. (strain JA-3-3Ab) (Cyanobacteria bacterium Yellowstone A-Prime).